The chain runs to 167 residues: MIYVDNRQNKVEASEKLIERLTEVIEFALKEEEVNMKCEISLLFVDNNEIKEINNETRGINRETDVLSFPMLEYEDKKVFKDMYKDYKFSQSDFDGDELVLGDIVLSLEKALEQSKEFNHSYEREASYLVVHSVLHLLGYDHMEDDDKIIMRSREEDILNKLNIIRG.

Zn(2+) is bound by residues His132, His136, and His142.

It belongs to the endoribonuclease YbeY family. The cofactor is Zn(2+).

The protein resides in the cytoplasm. In terms of biological role, single strand-specific metallo-endoribonuclease involved in late-stage 70S ribosome quality control and in maturation of the 3' terminus of the 16S rRNA. The sequence is that of Endoribonuclease YbeY from Clostridium beijerinckii (strain ATCC 51743 / NCIMB 8052) (Clostridium acetobutylicum).